The chain runs to 421 residues: Enolase (421 aa).

Q162 contacts (2R)-2-phosphoglycerate. The active-site Proton donor is the E204. D241, E284, and D311 together coordinate Mg(2+). (2R)-2-phosphoglycerate contacts are provided by K336, R365, S366, and K387. The active-site Proton acceptor is the K336.

This sequence belongs to the enolase family. It depends on Mg(2+) as a cofactor.

The protein localises to the cytoplasm. It localises to the secreted. Its subcellular location is the cell surface. The catalysed reaction is (2R)-2-phosphoglycerate = phosphoenolpyruvate + H2O. The protein operates within carbohydrate degradation; glycolysis; pyruvate from D-glyceraldehyde 3-phosphate: step 4/5. Functionally, catalyzes the reversible conversion of 2-phosphoglycerate (2-PG) into phosphoenolpyruvate (PEP). It is essential for the degradation of carbohydrates via glycolysis. This is Enolase from Nitratiruptor sp. (strain SB155-2).